The following is a 494-amino-acid chain: Hydroxyneurosporene desaturase (494 aa).

The protein belongs to the carotenoid/retinoid oxidoreductase family.

The catalysed reaction is rhodopin + A = (3E)-3,4-didehydrorhodopin + AH2. It functions in the pathway carotenoid biosynthesis; spheroidene biosynthesis. Its function is as follows. Catalyzes the introduction of C-3,4 double bonds into 1-hydroxyneurosporene (1-HO-Neu) to yield demethylspheroidene (DMS). The chain is Hydroxyneurosporene desaturase (crtD) from Rhodobacter capsulatus (strain ATCC BAA-309 / NBRC 16581 / SB1003).